The following is a 487-amino-acid chain: ATP synthase subunit beta (487 aa).

Position 164 to 171 (164 to 171 (GGAGVGKT)) interacts with ATP.

This sequence belongs to the ATPase alpha/beta chains family. As to quaternary structure, F-type ATPases have 2 components, CF(1) - the catalytic core - and CF(0) - the membrane proton channel. CF(1) has five subunits: alpha(3), beta(3), gamma(1), delta(1), epsilon(1). CF(0) has four main subunits: a(1), b(1), b'(1) and c(9-12).

The protein localises to the cellular thylakoid membrane. The enzyme catalyses ATP + H2O + 4 H(+)(in) = ADP + phosphate + 5 H(+)(out). Produces ATP from ADP in the presence of a proton gradient across the membrane. The catalytic sites are hosted primarily by the beta subunits. This Synechococcus sp. (strain CC9311) protein is ATP synthase subunit beta.